Reading from the N-terminus, the 287-residue chain is Mitochondrial glycine transporter A (287 aa).

3 Solcar repeats span residues 7-97 (HPAV…LKQR), 104-188 (PGPL…TKHL), and 198-282 (YAPV…LMAQ). A run of 6 helical transmembrane segments spans residues 13–38 (FMCG…TRLQ), 72–98 (GVSP…KQRY), 110–135 (VLLG…TRFE), 163–186 (GLMA…SQTK), 202–228 (ANFS…KTHI), and 257–275 (GAVP…AWTV).

The protein belongs to the mitochondrial carrier (TC 2.A.29) family. SLC25A38 subfamily. In terms of tissue distribution, at 24 hours post-fertilization, expressed predominantly in posterior blood island, posterior cardinal vein and circulating blood, as well as in somites, brain and retina. At 34 hours post-fertilization, becomes restricted to posterior blood island and circulating blood.

Its subcellular location is the mitochondrion inner membrane. It carries out the reaction glycine(in) = glycine(out). Mitochondrial glycine transporter that imports glycine into the mitochondrial matrix. Plays an important role in providing glycine for the first enzymatic step in heme biosynthesis, the condensation of glycine with succinyl-CoA to produce 5-aminolevulinate (ALA) in the mitochondrial matrix. Required during erythropoiesis. In terms of biological role, may play a role as pro-apoptotic protein that induces caspase-dependent apoptosis. This chain is Mitochondrial glycine transporter A (slc25a38a), found in Danio rerio (Zebrafish).